We begin with the raw amino-acid sequence, 291 residues long: Undecaprenyl-diphosphatase (291 aa).

The next 8 membrane-spanning stretches (helical) occupy residues 1-21 (MFII…LTEF), 48-68 (SAFT…AWVF), 102-122 (LHVL…DDFI), 126-146 (LFSV…MIIA), 162-182 (ISYF…WPGF), 203-223 (SDFT…LSLL), 231-251 (IADI…GLIA), and 267-287 (FAIY…GFGI).

It belongs to the UppP family.

Its subcellular location is the cell membrane. It carries out the reaction di-trans,octa-cis-undecaprenyl diphosphate + H2O = di-trans,octa-cis-undecaprenyl phosphate + phosphate + H(+). Catalyzes the dephosphorylation of undecaprenyl diphosphate (UPP). Confers resistance to bacitracin. The chain is Undecaprenyl-diphosphatase from Staphylococcus aureus (strain COL).